A 191-amino-acid chain; its full sequence is Peptidyl-tRNA hydrolase (191 aa).

Position 17 (Y17) interacts with tRNA. The active-site Proton acceptor is H22. 3 residues coordinate tRNA: Y68, N70, and N116.

It belongs to the PTH family. As to quaternary structure, monomer.

The protein resides in the cytoplasm. It carries out the reaction an N-acyl-L-alpha-aminoacyl-tRNA + H2O = an N-acyl-L-amino acid + a tRNA + H(+). Its function is as follows. Hydrolyzes ribosome-free peptidyl-tRNAs (with 1 or more amino acids incorporated), which drop off the ribosome during protein synthesis, or as a result of ribosome stalling. Functionally, catalyzes the release of premature peptidyl moieties from peptidyl-tRNA molecules trapped in stalled 50S ribosomal subunits, and thus maintains levels of free tRNAs and 50S ribosomes. This chain is Peptidyl-tRNA hydrolase, found in Francisella tularensis subsp. mediasiatica (strain FSC147).